We begin with the raw amino-acid sequence, 423 residues long: Gamma-glutamyl phosphate reductase (423 aa).

The protein belongs to the gamma-glutamyl phosphate reductase family.

Its subcellular location is the cytoplasm. It carries out the reaction L-glutamate 5-semialdehyde + phosphate + NADP(+) = L-glutamyl 5-phosphate + NADPH + H(+). It participates in amino-acid biosynthesis; L-proline biosynthesis; L-glutamate 5-semialdehyde from L-glutamate: step 2/2. Functionally, catalyzes the NADPH-dependent reduction of L-glutamate 5-phosphate into L-glutamate 5-semialdehyde and phosphate. The product spontaneously undergoes cyclization to form 1-pyrroline-5-carboxylate. The chain is Gamma-glutamyl phosphate reductase from Roseiflexus castenholzii (strain DSM 13941 / HLO8).